The chain runs to 343 residues: Anthranilate phosphoribosyltransferase (343 aa).

Residues Gly83, 86-87 (GD), Thr91, 93-96 (NIST), 111-119 (KHGGRSVSS), and Ser123 contribute to the 5-phospho-alpha-D-ribose 1-diphosphate site. Anthranilate is bound at residue Gly83. Ser95 contacts Mg(2+). Arg169 lines the anthranilate pocket. Residues Asp228 and Glu229 each contribute to the Mg(2+) site.

This sequence belongs to the anthranilate phosphoribosyltransferase family. Homodimer. Mg(2+) serves as cofactor.

It carries out the reaction N-(5-phospho-beta-D-ribosyl)anthranilate + diphosphate = 5-phospho-alpha-D-ribose 1-diphosphate + anthranilate. It participates in amino-acid biosynthesis; L-tryptophan biosynthesis; L-tryptophan from chorismate: step 2/5. In terms of biological role, catalyzes the transfer of the phosphoribosyl group of 5-phosphorylribose-1-pyrophosphate (PRPP) to anthranilate to yield N-(5'-phosphoribosyl)-anthranilate (PRA). The sequence is that of Anthranilate phosphoribosyltransferase from Thiobacillus denitrificans (strain ATCC 25259 / T1).